Reading from the N-terminus, the 238-residue chain is Ditrans,polycis-undecaprenyl-diphosphate synthase ((2E,6E)-farnesyl-diphosphate specific) (238 aa).

Asp14 is an active-site residue. Residue Asp14 participates in Mg(2+) binding. Residues 15-18 (GNGR), Trp19, Arg27, His31, and 59-61 (SSE) contribute to the substrate site. Asn62 (proton acceptor) is an active-site residue. Residues Trp63, Arg65, Arg182, and 188-190 (RIS) contribute to the substrate site. Position 201 (Glu201) interacts with Mg(2+).

The protein belongs to the UPP synthase family. In terms of assembly, homodimer. Mg(2+) is required as a cofactor.

The enzyme catalyses 8 isopentenyl diphosphate + (2E,6E)-farnesyl diphosphate = di-trans,octa-cis-undecaprenyl diphosphate + 8 diphosphate. Catalyzes the sequential condensation of isopentenyl diphosphate (IPP) with (2E,6E)-farnesyl diphosphate (E,E-FPP) to yield (2Z,6Z,10Z,14Z,18Z,22Z,26Z,30Z,34E,38E)-undecaprenyl diphosphate (di-trans,octa-cis-UPP). UPP is the precursor of glycosyl carrier lipid in the biosynthesis of bacterial cell wall polysaccharide components such as peptidoglycan and lipopolysaccharide. The sequence is that of Ditrans,polycis-undecaprenyl-diphosphate synthase ((2E,6E)-farnesyl-diphosphate specific) from Legionella pneumophila subsp. pneumophila (strain Philadelphia 1 / ATCC 33152 / DSM 7513).